We begin with the raw amino-acid sequence, 478 residues long: MRCGWMAGSSETVGIMDTADWYIGHGQVTVAPCVSIERSQIKSPDSGYGVFVDVDKLQEEECEAVELLRVPYGNVISVRTLMDWLSGRGDGYDASKDLIKTYLALFLEDTSNHRFVTETNMLILYLALMAILSERGYGFPDKFVIYLRDVLLQTRLLTPVLEVLTQEAGDAGAHYRNGPQEIFLSTLLQFISGAFMGCTRAVVLRVYAAVLSRCLEIPHETSPGSEDYTVSSSLVPILDFTNHSCEHRNAYFDVDRESGDVLLMLDVAACAGLGDRFEVFISYCPVEELVHFKHTYGFFPRASCGTQFWHMFLSDTWLKEERAPHGSGSLFQIYSELRVLPYIELALISGQVYVNDYCSSFPELLLPFVNIEALSDKESKLTALKGDQQLLAEAKTNFLSFLARYLDKLVANGPIRHSGPVCASLRDILLRELELSKRLRNTLQHGSAFLSSHMADTSPPYCPSPAPSPPYAYMYTSS.

In terms of domain architecture, SET spans 32–284; it reads PCVSIERSQI…DRFEVFISYC (253 aa). An SET-like region spans residues 199–299; the sequence is TRAVVLRVYA…VHFKHTYGFF (101 aa).

The protein belongs to the class V-like SAM-binding methyltransferase superfamily.

The protein localises to the cytoplasm. The protein resides in the cytosol. The catalysed reaction is L-lysyl-[cytochrome c] + S-adenosyl-L-methionine = N(6)-methyl-L-lysyl-[cytochrome c] + S-adenosyl-L-homocysteine + H(+). Its function is as follows. Methyltransferase which mediates trimethylation of cytochrome c (CYC1). The protein is Cytochrome c lysine N-methyltransferase 1 (CTM1) of Eremothecium gossypii (strain ATCC 10895 / CBS 109.51 / FGSC 9923 / NRRL Y-1056) (Yeast).